Consider the following 183-residue polypeptide: Thioredoxin/glutathione peroxidase BtuE (183 aa).

Cys-37 is an active-site residue.

It belongs to the glutathione peroxidase family. BtuE subfamily.

It localises to the periplasm. It carries out the reaction 2 glutathione + H2O2 = glutathione disulfide + 2 H2O. The catalysed reaction is a hydroperoxide + [thioredoxin]-dithiol = an alcohol + [thioredoxin]-disulfide + H2O. Non-specific peroxidase that can use thioredoxin or glutathione as a reducing agent. In vitro, utilizes preferentially thioredoxin A to decompose hydrogen peroxide as well as cumene-, tert-butyl-, and linoleic acid hydroperoxides, suggesting that it may have one or more organic hydroperoxide as its physiological substrate. This is Thioredoxin/glutathione peroxidase BtuE from Escherichia coli (strain K12).